A 197-amino-acid polypeptide reads, in one-letter code: Transposon Tn552 resolvase (197 aa).

The region spanning 1 to 136 is the Resolvase/invertase-type recombinase catalytic domain; that stretch reads MKIGYARVST…AGRIAARARG (136 aa). S9 acts as the O-(5'-phospho-DNA)-serine intermediate in catalysis. Residues 163 to 182 constitute a DNA-binding region (H-T-H motif); that stretch reads IKTIAEQWQVSRTTIYRYLN.

It belongs to the site-specific recombinase resolvase family.

In terms of biological role, resolvase catalyzes the resolution (a site-specific recombination) of the cointegrated replicon to yield the final transposition products. This chain is Transposon Tn552 resolvase (tnpR), found in Staphylococcus aureus.